Reading from the N-terminus, the 157-residue chain is Crossover junction endodeoxyribonuclease RuvC (157 aa).

Catalysis depends on residues Asp-7, Glu-67, and Asp-139. Residues Asp-7, Glu-67, and Asp-139 each contribute to the Mg(2+) site.

This sequence belongs to the RuvC family. As to quaternary structure, homodimer which binds Holliday junction (HJ) DNA. The HJ becomes 2-fold symmetrical on binding to RuvC with unstacked arms; it has a different conformation from HJ DNA in complex with RuvA. In the full resolvosome a probable DNA-RuvA(4)-RuvB(12)-RuvC(2) complex forms which resolves the HJ. It depends on Mg(2+) as a cofactor.

The protein localises to the cytoplasm. It catalyses the reaction Endonucleolytic cleavage at a junction such as a reciprocal single-stranded crossover between two homologous DNA duplexes (Holliday junction).. The RuvA-RuvB-RuvC complex processes Holliday junction (HJ) DNA during genetic recombination and DNA repair. Endonuclease that resolves HJ intermediates. Cleaves cruciform DNA by making single-stranded nicks across the HJ at symmetrical positions within the homologous arms, yielding a 5'-phosphate and a 3'-hydroxyl group; requires a central core of homology in the junction. The consensus cleavage sequence is 5'-(A/T)TT(C/G)-3'. Cleavage occurs on the 3'-side of the TT dinucleotide at the point of strand exchange. HJ branch migration catalyzed by RuvA-RuvB allows RuvC to scan DNA until it finds its consensus sequence, where it cleaves and resolves the cruciform DNA. This Prochlorococcus marinus (strain MIT 9312) protein is Crossover junction endodeoxyribonuclease RuvC.